Reading from the N-terminus, the 740-residue chain is MGKNKKQAAEGEEARRGSESSGSSAEPSGAVAELPSFKKTAGGARSGLIEQDAVDTIREQTAVKFADEDEVVEQDEAAQKTEAVASESSSLADKEECDESKLDHFRKFFRRTSSRSSDEGEGGGMMERFINMTGGGMVPVVTEAPEEDEEAGPDPTAEAEAAAREIMKAHHLSSGQSVDMMSMSSSGESGFFMPVAEHYDDEYNPEQEEEQRDDMSEATYVPPPQHVRGGVLGSLLRLYQNQPGGQAPQRPGLRKSAQTLSSETLPTGESYEMPKFKAKRPRGSKIPNPIKLKRKSAMSEARITVHIADLLQRHRFILRLCKAFMMYGAPTHRLEEYMVMTSRVLEIDSQFLYLPGCMVVSFGDTITRTSEVQLVRCSQGLNLWKLHQVHSIYKQVVHDIISVEDASRTIETIMAEKNLYPAWMCVLLYGFCASMVTPFAFGGDWINLVVSFGIGCCVGLLQFIVAQRSHVYSNVFEITASIVVSFCARALGSIPNSNICFGSTVQGSLALILPGYIILCGSLELQSRSLVAGSVRMFYAIIYSLFLGFGITLGAALFGWIYRDATNETVCEKELSPWFRFIFVPGFALGLSLINQARWSQIPVMVCIACSGYVVTYWSGQHFTASTEFTASIGAFVIGIMGNLYSRIWKGLAMTAMLPGIFVQVPSGIASKSTLLSSVQSANNMVSNGTNAAVNSVDGRTSISFGITMIQVCIGISVGLFASTLVVYPFGKKRTGLFTL.

Disordered regions lie at residues 1-48 (MGKN…RSGL), 65-97 (FADE…KEEC), and 241-269 (NQPG…PTGE). Residues 7 to 18 (QAAEGEEARRGS) are compositionally biased toward basic and acidic residues. A compositionally biased stretch (low complexity) spans 19–33 (ESSGSSAEPSGAVAE). Residues 67-76 (DEDEVVEQDE) are compositionally biased toward acidic residues. The segment covering 256–267 (SAQTLSSETLPT) has biased composition (polar residues). 10 helical membrane passes run 422–442 (AWMC…FAFG), 445–465 (WINL…QFIV), 475–495 (VFEI…GSIP), 499–519 (ICFG…YIIL), 541–561 (IIYS…FGWI), 574–594 (ELSP…LSLI), 599–619 (WSQI…TYWS), 622–642 (HFTA…GIMG), 651–671 (GLAM…GIAS), and 707–727 (ITMI…TLVV).

Belongs to the ThrE exporter (TC 2.A.79) family.

The protein resides in the membrane. In Eremothecium gossypii (strain ATCC 10895 / CBS 109.51 / FGSC 9923 / NRRL Y-1056) (Yeast), this protein is Pheromone-regulated membrane protein 10.